A 309-amino-acid polypeptide reads, in one-letter code: ESX-3 secretion system protein EccE3 (309 aa).

The next 2 helical transmembrane spans lie at 5–25 (IALA…QTTT) and 29–49 (VLGV…GMFL).

It belongs to the EccE family. In terms of assembly, part of the ESX-3 / type VII secretion system (T7SS), which is composed of cytosolic and membrane components. The ESX-3 membrane complex is composed of EccB3, EccC3, EccD3 and EccE3.

It localises to the cell inner membrane. Part of the ESX-3 specialized secretion system, which is required for siderophore-mediated iron acquisition and for the secretion of EsxH and EsxG. The protein is ESX-3 secretion system protein EccE3 of Mycolicibacterium smegmatis (strain ATCC 700084 / mc(2)155) (Mycobacterium smegmatis).